Consider the following 335-residue polypeptide: Phosphoserine phosphatase RsbU (335 aa).

The 211-residue stretch at 123 to 333 folds into the PPM-type phosphatase domain; sequence DIGAISVPAK…DDFTLIVLRR (211 aa).

The enzyme catalyses O-phospho-L-serine + H2O = L-serine + phosphate. The catalysed reaction is O-phospho-D-serine + H2O = D-serine + phosphate. Its activity is regulated as follows. Stimulated by a long-lived interaction with RsbT. In terms of biological role, positive regulator of sigma-B activity. Dephosphorylates RsbV in response to environmental stress conveyed from the RsbXST module. This chain is Phosphoserine phosphatase RsbU (rsbU), found in Bacillus subtilis (strain 168).